The chain runs to 502 residues: MQIKAEEISKIIEEQIQSYEQRVEMSETGTVLSVGDGIARVYGVRNAMAMELLEFPGGLMGMVLNLEEDNVGVALLGEDTGIKEGDPVKRTGKIFSVPVGDEVMGRVLNPLGQPIDGLGPLEAKEFRPVELKAPGIIARKSVHQPMPTGIKAIDAMTPIGRGQRELIIGDRQTGKTAVCIDAILAQRDTGIRCFYVAIGQKKATVALVADTLRKHGAMEYTTIISATASEPAPLQFISAYSGCTMAEFYRDKGDHALIIYDDLSKQAVAYRQMSLLLRRPPGREAYPGDVFYLHSRLLERAAKVNDSLGAGSLTALPIIETQAGDVSAYIPTNVISITDGQVYLEPNLFNAGIRPAINVGLSVSRVGGAAQIKAMKQVAGTMRLDLAQYRELAAFAQFGSDLDKATKQKLDRGARLVELLKQPQYQPMPVEQQVASMYAATRGLMDDVPVLAIRKFEAEMLDFLKNSKADILNDIKTKKALDADIEDRLKAAVAEFKKGFQA.

An ATP-binding site is contributed by 169–176; sequence GDRQTGKT.

This sequence belongs to the ATPase alpha/beta chains family. As to quaternary structure, F-type ATPases have 2 components, CF(1) - the catalytic core - and CF(0) - the membrane proton channel. CF(1) has five subunits: alpha(3), beta(3), gamma(1), delta(1), epsilon(1). CF(0) has three main subunits: a(1), b(2) and c(9-12). The alpha and beta chains form an alternating ring which encloses part of the gamma chain. CF(1) is attached to CF(0) by a central stalk formed by the gamma and epsilon chains, while a peripheral stalk is formed by the delta and b chains.

Its subcellular location is the cell inner membrane. It carries out the reaction ATP + H2O + 4 H(+)(in) = ADP + phosphate + 5 H(+)(out). Functionally, produces ATP from ADP in the presence of a proton gradient across the membrane. The alpha chain is a regulatory subunit. This chain is ATP synthase subunit alpha, found in Nitratidesulfovibrio vulgaris (strain DSM 19637 / Miyazaki F) (Desulfovibrio vulgaris).